We begin with the raw amino-acid sequence, 131 residues long: uncharacterized protein (131 aa).

This is an uncharacterized protein from Staphylococcus aureus.